We begin with the raw amino-acid sequence, 446 residues long: MRVLHVTSEVFPFSRSGGLGDVLGALPAVQATLGAQVSVLSPWYGSLAGAPEQIWAGDVADVGPVRVGELRQDGVRFLFLGLPEFEREGLYHPDDVWRFCTYGRAVLPVLRALNEVPDVLHGHDWQAGLVVAHAHEAGWRTVYTVHNLQYQGRWNLAEASGWSGLGPAWLTHEGAEFYGDLNLMKAGLIAANHVTTVSPQYAREITTQQYGEGLQGVLLRLTLEGRLSGIINGLDQERWNPRTDPDVPAYSDLAGKAAATQALRTEFGLDKAPVLGVVSRLADQKGMDLLIEALPRLVHNWNVVVLGGGDPLLTAALEGWAQHPRVSFAQGMNEALAHQIYAGSDAFAMPSRFEPCGLSQMIAMRYGTLPVVRETGGLVDTVPPDVGFRFQPATPEALVEACQQARAAFEDQSDWEARVARAMALDFSWDGPAREYLALYERVVTG.

R15 lines the ADP-alpha-D-glucose pocket.

This sequence belongs to the glycosyltransferase 1 family. Bacterial/plant glycogen synthase subfamily.

It carries out the reaction [(1-&gt;4)-alpha-D-glucosyl](n) + ADP-alpha-D-glucose = [(1-&gt;4)-alpha-D-glucosyl](n+1) + ADP + H(+). Its pathway is glycan biosynthesis; glycogen biosynthesis. Its function is as follows. Synthesizes alpha-1,4-glucan chains using ADP-glucose. In Deinococcus deserti (strain DSM 17065 / CIP 109153 / LMG 22923 / VCD115), this protein is Glycogen synthase.